The following is a 132-amino-acid chain: Large ribosomal subunit protein bL17 (132 aa).

Belongs to the bacterial ribosomal protein bL17 family. Part of the 50S ribosomal subunit. Contacts protein L32.

This chain is Large ribosomal subunit protein bL17, found in Ehrlichia canis (strain Jake).